Consider the following 292-residue polypeptide: Mycothiol acetyltransferase (292 aa).

N-acetyltransferase domains are found at residues 13–168 and 159–292; these read ALDR…KWLQ and KSVA…VYEK. A 1D-myo-inositol 2-(L-cysteinylamino)-2-deoxy-alpha-D-glucopyranoside-binding site is contributed by Glu40. Acetyl-CoA is bound at residue 77–79; sequence LAV. Residues Glu179, Lys218, and Glu226 each contribute to the 1D-myo-inositol 2-(L-cysteinylamino)-2-deoxy-alpha-D-glucopyranoside site. Acetyl-CoA contacts are provided by residues 230-232 and 237-243; these read VGL and RGRGLGD. A 1D-myo-inositol 2-(L-cysteinylamino)-2-deoxy-alpha-D-glucopyranoside-binding site is contributed by Tyr264.

The protein belongs to the acetyltransferase family. MshD subfamily. Monomer.

It catalyses the reaction 1D-myo-inositol 2-(L-cysteinylamino)-2-deoxy-alpha-D-glucopyranoside + acetyl-CoA = mycothiol + CoA + H(+). Catalyzes the transfer of acetyl from acetyl-CoA to desacetylmycothiol (Cys-GlcN-Ins) to form mycothiol. The polypeptide is Mycothiol acetyltransferase (Corynebacterium glutamicum (strain R)).